Here is a 427-residue protein sequence, read N- to C-terminus: Glutamyl-tRNA reductase (427 aa).

Residues 49-52 (TCNR), S101, 106-108 (EPQ), and Q112 each bind substrate. Residue C50 is the Nucleophile of the active site. 181–186 (GAGETI) serves as a coordination point for NADP(+). The tract at residues 407-427 (FPATPGYRHPPVRPDDADPAP) is disordered. A compositionally biased stretch (basic and acidic residues) spans 418-427 (VRPDDADPAP).

Belongs to the glutamyl-tRNA reductase family. As to quaternary structure, homodimer.

It carries out the reaction (S)-4-amino-5-oxopentanoate + tRNA(Glu) + NADP(+) = L-glutamyl-tRNA(Glu) + NADPH + H(+). The protein operates within porphyrin-containing compound metabolism; protoporphyrin-IX biosynthesis; 5-aminolevulinate from L-glutamyl-tRNA(Glu): step 1/2. Functionally, catalyzes the NADPH-dependent reduction of glutamyl-tRNA(Glu) to glutamate 1-semialdehyde (GSA). The polypeptide is Glutamyl-tRNA reductase (Stenotrophomonas maltophilia (strain R551-3)).